The sequence spans 89 residues: Small ribosomal subunit protein uS15 (89 aa).

The protein belongs to the universal ribosomal protein uS15 family. Part of the 30S ribosomal subunit. Forms a bridge to the 50S subunit in the 70S ribosome, contacting the 23S rRNA.

One of the primary rRNA binding proteins, it binds directly to 16S rRNA where it helps nucleate assembly of the platform of the 30S subunit by binding and bridging several RNA helices of the 16S rRNA. In terms of biological role, forms an intersubunit bridge (bridge B4) with the 23S rRNA of the 50S subunit in the ribosome. The polypeptide is Small ribosomal subunit protein uS15 (Coxiella burnetii (strain CbuK_Q154) (Coxiella burnetii (strain Q154))).